We begin with the raw amino-acid sequence, 517 residues long: Aldehyde dehydrogenase X, mitochondrial (517 aa).

Residues 1–17 (MLRFLAPRLLSLQGRTA) constitute a mitochondrion transit peptide. K51 is subject to N6-acetyllysine. N6-acetyllysine; alternate is present on K52. K52 carries the post-translational modification N6-succinyllysine; alternate. K81 carries the N6-succinyllysine modification. Residue 262–267 (GSTEVG) participates in NAD(+) binding. Catalysis depends on E285, which acts as the Proton acceptor. The Nucleophile role is filled by C319. 5 positions are modified to N6-acetyllysine; alternate: K364, K383, K399, K414, and K426. An N6-succinyllysine; alternate mark is found at K364, K383, K399, K414, and K426. Residue K429 is modified to N6-acetyllysine.

Belongs to the aldehyde dehydrogenase family. Homotetramer. Liver, testis and to a lesser extent in brain.

The protein localises to the mitochondrion matrix. The catalysed reaction is an aldehyde + NAD(+) + H2O = a carboxylate + NADH + 2 H(+). It participates in alcohol metabolism; ethanol degradation; acetate from ethanol: step 2/2. Functionally, ALDHs play a major role in the detoxification of alcohol-derived acetaldehyde. They are involved in the metabolism of corticosteroids, biogenic amines, neurotransmitters, and lipid peroxidation. This chain is Aldehyde dehydrogenase X, mitochondrial (ALDH1B1), found in Homo sapiens (Human).